The primary structure comprises 577 residues: Lysine-specific demethylase 7B (577 aa).

A PHD-type zinc finger spans residues 5–56; it reads QLYCVCRQPYDVSRFMIECDICKDWFHGSCVEVEEHYAVDIDVYHCPNCDVH. The 157-residue stretch at 198 to 354 folds into the JmjC domain; sequence FSDTKMAELV…MQLRCYEMER (157 aa). T247 is a binding site for substrate. Residues H250 and D252 each coordinate Fe cation. K267 is a substrate binding site. H322 contributes to the Fe cation binding site. The interval 460 to 513 is disordered; sequence CPSTRSAHERGSHARKTARRLRGHHHHHHRHHHHHHHHHHHNHQHSDGPKAPSH. Over residues 472-502 the composition is skewed to basic residues; the sequence is HARKTARRLRGHHHHHHRHHHHHHHHHHHNH.

The protein belongs to the JHDM1 histone demethylase family. JHDM1D subfamily. Fe(2+) is required as a cofactor. As to expression, predominantly expressed in brain.

The protein resides in the nucleus. In terms of biological role, histone demethylase required for brain development. Specifically demethylates dimethylated 'Lys-9' and 'Lys-27' (H3K9me2 and H3K27me2, respectively) of histone H3 and monomethylated histone H4 'Lys-20' residue (H4K20Me1), thereby playing a central role in histone code. In Danio rerio (Zebrafish), this protein is Lysine-specific demethylase 7B (jhdm1db).